Consider the following 69-residue polypeptide: Large ribosomal subunit protein uL29 (69 aa).

Belongs to the universal ribosomal protein uL29 family.

This Carboxydothermus hydrogenoformans (strain ATCC BAA-161 / DSM 6008 / Z-2901) protein is Large ribosomal subunit protein uL29.